We begin with the raw amino-acid sequence, 410 residues long: Ribulose bisphosphate carboxylase large chain (410 aa).

Residues Asn100 and Thr150 each contribute to the substrate site. Lys152 serves as the catalytic Proton acceptor. Residue Lys154 coordinates substrate. Positions 178, 180, and 181 each coordinate Mg(2+). Lys178 carries the post-translational modification N6-carboxylysine. Residue His271 is the Proton acceptor of the active site. 3 residues coordinate substrate: Arg272, His304, and Ser356.

Belongs to the RuBisCO large chain family. Type I subfamily. Heterohexadecamer of 8 large chains and 8 small chains; disulfide-linked. The disulfide link is formed within the large subunit homodimers. Mg(2+) is required as a cofactor. Post-translationally, the disulfide bond which can form in the large chain dimeric partners within the hexadecamer appears to be associated with oxidative stress and protein turnover.

Its subcellular location is the plastid. The protein resides in the chloroplast. The catalysed reaction is 2 (2R)-3-phosphoglycerate + 2 H(+) = D-ribulose 1,5-bisphosphate + CO2 + H2O. It carries out the reaction D-ribulose 1,5-bisphosphate + O2 = 2-phosphoglycolate + (2R)-3-phosphoglycerate + 2 H(+). In terms of biological role, ruBisCO catalyzes two reactions: the carboxylation of D-ribulose 1,5-bisphosphate, the primary event in carbon dioxide fixation, as well as the oxidative fragmentation of the pentose substrate in the photorespiration process. Both reactions occur simultaneously and in competition at the same active site. The polypeptide is Ribulose bisphosphate carboxylase large chain (rbcL) (Gleichenia japonica (Urajiro)).